Here is a 224-residue protein sequence, read N- to C-terminus: MASSSLFLLGALLVLASWQAIVAYDPSPLQDFCVADMNSPVRVNGFACKNPMDVSSEDFFNAAKFDMPRNTFNKLGSNVTNLNVMEFPGLNTLGISLARIDYAPMGVNPPHIHPRATELLTVLEGTLYVGFVTSNPNKLFSKVVCKGDVFVFPKAMIHFQMNLDHDKPAVAQSALSSQNPGVITIASAVFGSQPPISDDVLTKAFQVEKKLIDWLQSQFWENNY.

A signal peptide spans 1–23; it reads MASSSLFLLGALLVLASWQAIVA. Cysteines 33 and 48 form a disulfide. Positions 60–213 constitute a Cupin type-1 domain; sequence FNAAKFDMPR…AFQVEKKLID (154 aa). Residue Asn-78 is glycosylated (N-linked (GlcNAc...) asparagine). Mn(2+)-binding residues include His-111, His-113, Glu-118, and His-158.

The protein belongs to the germin family. As to quaternary structure, oligomer (believed to be a pentamer but probably hexamer).

Its subcellular location is the secreted. The protein resides in the extracellular space. The protein localises to the apoplast. In terms of biological role, plays a role in broad-spectrum disease resistance. Probably has no oxalate oxidase activity even if the active site is conserved. This chain is Germin-like protein 8-12, found in Oryza sativa subsp. japonica (Rice).